We begin with the raw amino-acid sequence, 272 residues long: Sordarin/hypoxysordarin biosynthesis cluster protein P (272 aa).

Asn6 and Asn23 each carry an N-linked (GlcNAc...) asparagine glycan. 2 consecutive transmembrane segments (helical) span residues 31 to 51 (FLASIWPYRHMMWIGPMLLFL) and 67 to 87 (AYHMPYSILALHVFISFVDLA). Asn208 carries N-linked (GlcNAc...) asparagine glycosylation.

Its subcellular location is the membrane. It participates in antibiotic biosynthesis. In terms of biological role, part of the gene cluster that mediates the biosynthesis of sordarin and hypoxysordarin, glycoside antibiotics with a unique tetracyclic diterpene aglycone structure. First, the geranylgeranyl diphosphate synthase sdnC constructs GGDP from farnesyl diphosphate and isopentenyl diphosphate. The diterpene cyclase sdnA then catalyzes the cyclization of GGDP to afford cycloaraneosene. Cycloaraneosene is then hydroxylated four times by the putative cytochrome P450 monooxygenases sdnB, sdnE, sdnF and sdnH to give a hydroxylated cycloaraneosene derivative such as cycloaraneosene-8,9,13,19-tetraol. Although the order of the hydroxylations is unclear, at least C8, C9 and C13 of the cycloaraneosene skeleton are hydroxylated before the sordaricin formation. Dehydration of the 13-hydroxy group of the hydroxylated cycloaraneosene derivative might be catalyzed by an unassigned hypothetical protein such as sdnG and sdnP to construct the cyclopentadiene moiety. The FAD-dependent oxidoreductase sdnN is proposed to catalyze the oxidation at C9 of the hydroxylated cycloaraneosene derivative and also catalyze the Baeyer-Villiger oxidation to give the lactone intermediate. The presumed lactone intermediate would be hydrolyzed to give an acrolein moiety and a carboxylate moiety. Then, [4+2]cycloaddition would occur between the acrolein moiety and the cyclopentadiene moiety to give sordaricin. SdnN might also be involved in the [4+2]cycloaddition after the hypothesized oxidation to accommodate the oxidized product and prompt the [4+2]cycloaddition. GDP-6-deoxy-D-altrose may be biosynthesized from GDP-D-mannose by the putative GDP-mannose-4,6-dehydratase sdnI and the short-chain dehydrogenase sdnK. The glycosyltransferase sdnJ catalyzes the attachment of 6-deoxy-D-altrose onto the 19-hydroxy group of sordaricin to give 4'-O-demethylsordarin. The methyltransferase sdnD would complete the biosynthesis of sordarin. Sordarin can be further modified into hypoxysordarin. The unique acyl chain at the 3'-hydroxy group of hypoxysordarin would be constructed by an iterative type I PKS sdnO and the trans-acting polyketide methyltransferase sdnL. SdnL would be responsible for the introduction of an alpha-methyl group of the polyketide chain. Alternatively, the beta-lactamase-like protein sdnR might be responsible for the cleavage and transfer of the polyketide chain from the PKS sdnO to sordarin. Two putative cytochrome P450 monooxygenases, sdnQ and sdnT, might catalyze the epoxidations of the polyketide chain to complete the biosynthesis of hypoxysordarin. Transcriptional regulators sdnM and sdnS are presumably encoded for the transcriptional regulation of the expression of the sdn gene cluster. This chain is Sordarin/hypoxysordarin biosynthesis cluster protein P, found in Sordaria araneosa (Pleurage araneosa).